The following is a 358-amino-acid chain: Chorismate synthase (358 aa).

Arg-47 lines the NADP(+) pocket. FMN contacts are provided by residues 124–126 (RSS), 240–241 (NA), Gly-284, 299–303 (KPVAT), and Arg-325.

It belongs to the chorismate synthase family. Homotetramer. Requires FMNH2 as cofactor.

It carries out the reaction 5-O-(1-carboxyvinyl)-3-phosphoshikimate = chorismate + phosphate. The protein operates within metabolic intermediate biosynthesis; chorismate biosynthesis; chorismate from D-erythrose 4-phosphate and phosphoenolpyruvate: step 7/7. Catalyzes the anti-1,4-elimination of the C-3 phosphate and the C-6 proR hydrogen from 5-enolpyruvylshikimate-3-phosphate (EPSP) to yield chorismate, which is the branch point compound that serves as the starting substrate for the three terminal pathways of aromatic amino acid biosynthesis. This reaction introduces a second double bond into the aromatic ring system. The protein is Chorismate synthase of Bacteroides fragilis (strain YCH46).